A 367-amino-acid polypeptide reads, in one-letter code: uncharacterized protein (367 aa).

The helical transmembrane segment at 6–26 (IAAGVVVALAAVWCTSAWFTG) threads the bilayer.

To E.coli YdgA and YihF.

It is found in the membrane. This is an uncharacterized protein from Haemophilus influenzae (strain ATCC 51907 / DSM 11121 / KW20 / Rd).